Consider the following 457-residue polypeptide: Argininosuccinate lyase (457 aa).

Belongs to the lyase 1 family. Argininosuccinate lyase subfamily.

It localises to the cytoplasm. The enzyme catalyses 2-(N(omega)-L-arginino)succinate = fumarate + L-arginine. The protein operates within amino-acid biosynthesis; L-arginine biosynthesis; L-arginine from L-ornithine and carbamoyl phosphate: step 3/3. This is Argininosuccinate lyase from Pectobacterium carotovorum subsp. carotovorum (strain PC1).